The chain runs to 546 residues: MATTQVEIQRPIANFSPSLWGDQFIKNDSGAKAAEKHCKAVEELKKEVMNMITAAESNLVEAMNLIDTLERLGISYHFEKEIDQKLNHFFSLNTDYSDESYDLYTVSLHFRLFRQHGHRISSDIFGRWIDESGKFKEGLKTDGKGLLSLYEASYLRTRGETILDDALEFATATLNSIAPHLESPLSKQVVHALIQPLHYGNPRIEAHNFISIYEENQDKNEFLLKFAKLDYNLLQMLHKEELHEVSRWWKELDLVSKLPYARDRVVECFFWAMGVYHEPQYSRARIMLTKTITMTSIIDDTYDAYGVIEELDIFTEAIERWNIEEMDRLPEYVKPFYKALLELYEQFEEELAEEGRSYAAHYAIESLKELVRSYHVEAKWFIQGYLPPFEEYLKNALITCTYCYHTTTSLLGVESAVEEDFQWLAKKPKMLVAGLLICRVIDDIATYEVEKERGQSATGIESYMRDNNATIEEAVAKFFEIATDAWKDINEECLMPSPYSRDVLMRILNLERIIDVTYKGNEDGYTQPEKVLKPHIIALFVDPIKM.

The Mg(2+) site is built by aspartate 299, aspartate 303, aspartate 442, threonine 446, and glutamate 450. The DDXXD motif signature appears at 299-303 (DDTYD).

Belongs to the terpene synthase family. Tpsa subfamily. Monomer. Mg(2+) is required as a cofactor. Highly expressed in flowers and at lower levels in leaves.

The catalysed reaction is (2E,6E)-farnesyl diphosphate = (-)-5-epi-eremophilene + diphosphate. Its pathway is secondary metabolite biosynthesis; terpenoid biosynthesis. Its function is as follows. Sesquiterpene synthase that catalyzes the conversion of farnesyl diphosphate to (-)-5-epi-eremophilene. This chain is (-)-5-epieremophilene synthase STPS3, found in Salvia miltiorrhiza (Chinese sage).